The chain runs to 404 residues: Multidrug resistance protein MdtG (404 aa).

11 consecutive transmembrane segments (helical) span residues 19 to 39, 56 to 76, 90 to 110, 113 to 133, 144 to 164, 171 to 191, 222 to 242, 254 to 274, 288 to 308, 317 to 337, and 376 to 396; these read LGCF…PLYV, LVFS…GGLA, LGMA…QFLI, ALLG…ATQV, TLST…GLLA, PVFF…FFFI, LFVT…ILTL, IAFI…LSAP, ILIV…FVQT, FLLG…LVYN, and AVFC…WNSL.

This sequence belongs to the major facilitator superfamily. DHA1 family. MdtG (TC 2.A.1.2.20) subfamily.

The protein localises to the cell inner membrane. The polypeptide is Multidrug resistance protein MdtG (Salmonella typhi).